A 1538-amino-acid polypeptide reads, in one-letter code: Dicer-like protein 1 (1538 aa).

The tract at residues 39–72 (DPAESSADVHKDEHSSDNSDNDNEAVPKPNDFSQ) is disordered. Basic and acidic residues predominate over residues 45 to 55 (ADVHKDEHSSD). The 182-residue stretch at 134-315 (LFERAKTQNT…EAATRLETLL (182 aa)) folds into the Helicase ATP-binding domain. 147 to 154 (LDTGSGKT) serves as a coordination point for ATP. A DEAH box motif is present at residues 260–263 (DEAH). In terms of domain architecture, Helicase C-terminal spans 460–619 (ELSKHFSDTT…ETLPEDRILH (160 aa)). In terms of domain architecture, Dicer dsRNA-binding fold spans 652-742 (AIAILARYAS…NSIYHRRLPA (91 aa)). One can recognise a PAZ domain in the interval 892–1020 (DTVSFVHNND…ICAEPLRISA (129 aa)). 2 RNase III domains span residues 1044-1203 (IALE…LSGG) and 1254-1406 (ARHV…VDSK). Mg(2+)-binding residues include Glu1295, Asp1392, and Glu1395. Residues 1440-1508 (TFLHNKLTNE…SEKALAVLDG (69 aa)) enclose the DRBM domain. Residues Cys1452, His1479, Cys1520, and Cys1522 each coordinate Zn(2+).

The protein belongs to the helicase family. Dicer subfamily. Mg(2+) is required as a cofactor. The cofactor is Mn(2+).

Functionally, dicer-like endonuclease involved in cleaving double-stranded RNA in the RNA interference (RNAi) pathway. Produces 21 to 25 bp dsRNAs (siRNAs) which target the selective destruction of homologous RNAs leading to sequence-specific suppression of gene expression, called post-transcriptional gene silencing (PTGS). Part of a broad host defense response against viral infection and transposons. This is Dicer-like protein 1 (dcl1) from Neosartorya fischeri (strain ATCC 1020 / DSM 3700 / CBS 544.65 / FGSC A1164 / JCM 1740 / NRRL 181 / WB 181) (Aspergillus fischerianus).